A 329-amino-acid polypeptide reads, in one-letter code: Transcription factor MYB2 (329 aa).

2 consecutive HTH myb-type domains span residues 17–69 (GGDL…LNYL) and 70–124 (RPDL…QKHA). 2 DNA-binding regions (H-T-H motif) span residues 45-69 (WNSL…LNYL) and 97-120 (WSKI…RTRV). Low complexity-rich tracts occupy residues 155–166 (AAAGQQQQQEGG) and 217–235 (LSST…GAGA). 2 disordered regions span residues 155–189 (AAAG…PELP) and 206–242 (GAQS…WPTQ).

Highly expressed in leaves. Expressed in roots and shoots. Expressed at low levels in flowers.

It localises to the nucleus. Functionally, transcription factor involved in abiotic stress responses. Plays a regulatory role in tolerance to salt, cold, and drought stresses. Positively regulates the expression of genes involved in proline synthesis and transport, and genes involved in reactive oxygen species (ROS) scavenging such as peroxidase, superoxide dismutase and catalase during salt stress. Transactivates stress-related genes, including LEA3, RAB16A and DREB2A during salt stress. The chain is Transcription factor MYB2 from Oryza sativa subsp. japonica (Rice).